The chain runs to 74 residues: Large ribosomal subunit protein bL31 (74 aa).

This sequence belongs to the bacterial ribosomal protein bL31 family. Type A subfamily. In terms of assembly, part of the 50S ribosomal subunit.

Its function is as follows. Binds the 23S rRNA. The chain is Large ribosomal subunit protein bL31 from Chlorobaculum parvum (strain DSM 263 / NCIMB 8327) (Chlorobium vibrioforme subsp. thiosulfatophilum).